A 623-amino-acid chain; its full sequence is ATPase expression protein 3 (623 aa).

PPR repeat units follow at residues 217 to 251 (SVQCYNDILYFYSKKYDFATCRELFAQMKVEGCKP), 252 to 292 (NTTT…NGIF), 362 to 396 (NLKFVNLLISDLVLDHNVERAWSVLRYFELKQLKF), 405 to 439 (NSETMNTFLRYFAEQGRIDLCFLTYNYFVKDLVGP), and 445 to 479 (NVNTFDMLMKSLVKNGYTETLPTVFEVICALSERY).

It localises to the mitochondrion inner membrane. Required for respiration. This Candida glabrata (strain ATCC 2001 / BCRC 20586 / JCM 3761 / NBRC 0622 / NRRL Y-65 / CBS 138) (Yeast) protein is ATPase expression protein 3 (AEP3).